The following is a 107-amino-acid chain: Putative double-stranded DNA mimic protein YE2228 (107 aa).

Belongs to the putative dsDNA mimic protein family.

In terms of biological role, may act as a double-stranded DNA (dsDNA) mimic. Probably regulates the activity of a dsDNA-binding protein. The chain is Putative double-stranded DNA mimic protein YE2228 from Yersinia enterocolitica serotype O:8 / biotype 1B (strain NCTC 13174 / 8081).